Consider the following 194-residue polypeptide: Ion-translocating oxidoreductase complex subunit B (194 aa).

The interval 1 to 26 (MSGVLIAVAALLALAAVFGAVLGFAS) is hydrophobic. The 4Fe-4S domain maps to 32 to 90 (EGDPIVDQIDSLLPQTQCGQCGHPGCRPYAEAIAEGEEHNRCPPGGQDTVVALSELLGR). Residues Cys-49, Cys-52, Cys-57, Cys-73, Cys-116, Cys-119, Cys-122, Cys-126, Cys-146, Cys-149, Cys-152, and Cys-156 each coordinate [4Fe-4S] cluster. 2 4Fe-4S ferredoxin-type domains span residues 107–136 (KVAYIREDECIGCTKCIQACPVDAIVGAAK) and 137–166 (LMHTVIVDECTGCDLCVEPCPVDCIDMLEV).

The protein belongs to the 4Fe4S bacterial-type ferredoxin family. RnfB subfamily. In terms of assembly, the complex is composed of six subunits: RnfA, RnfB, RnfC, RnfD, RnfE and RnfG. The cofactor is [4Fe-4S] cluster.

The protein localises to the cell inner membrane. In terms of biological role, part of a membrane-bound complex that couples electron transfer with translocation of ions across the membrane. This is Ion-translocating oxidoreductase complex subunit B from Alcanivorax borkumensis (strain ATCC 700651 / DSM 11573 / NCIMB 13689 / SK2).